The following is a 179-amino-acid chain: Large ribosomal subunit protein uL5 (179 aa).

This sequence belongs to the universal ribosomal protein uL5 family. In terms of assembly, part of the 50S ribosomal subunit; part of the 5S rRNA/L5/L18/L25 subcomplex. Contacts the 5S rRNA and the P site tRNA. Forms a bridge to the 30S subunit in the 70S ribosome.

Functionally, this is one of the proteins that bind and probably mediate the attachment of the 5S RNA into the large ribosomal subunit, where it forms part of the central protuberance. In the 70S ribosome it contacts protein S13 of the 30S subunit (bridge B1b), connecting the 2 subunits; this bridge is implicated in subunit movement. Contacts the P site tRNA; the 5S rRNA and some of its associated proteins might help stabilize positioning of ribosome-bound tRNAs. The protein is Large ribosomal subunit protein uL5 of Thioalkalivibrio sulfidiphilus (strain HL-EbGR7).